The primary structure comprises 339 residues: Paired box protein Pax-9 (339 aa).

A DNA-binding region (paired) is located at residues 2–128 (AFGEVNQLGG…SSISRILRNK (127 aa)). Positions 5–61 (EVNQLGGVFVNGRPLPNAIRLRIVELAQLGIRPCDISRQLRVSHGCVSKILARYNET) are PAI subdomain. The RED subdomain stretch occupies residues 80–128 (TVVKHIRTYKQRDPGIFAWEIRDRLLADGVCDKYNVPSVSSISRILRNK).

The protein localises to the nucleus. In Gallus gallus (Chicken), this protein is Paired box protein Pax-9 (PAX9).